Reading from the N-terminus, the 557-residue chain is Eudesmanediol synthase (557 aa).

Aspartate 310 and aspartate 314 together coordinate Mg(2+). Substrate is bound by residues aspartate 310, aspartate 314, and arginine 450. Residues 310–314 (DDTFD) carry the DDXXD motif motif. Residues asparagine 453 and serine 457 each coordinate Mg(2+).

It belongs to the terpene synthase family. Monomer. It depends on Mg(2+) as a cofactor. The cofactor is Mn(2+).

Its subcellular location is the cytoplasm. The enzyme catalyses (2E,6E)-farnesyl diphosphate + 2 H2O = 7-epi-ent-eudesmane-5,11-diol + diphosphate. It participates in secondary metabolite biosynthesis; terpenoid biosynthesis. Functionally, component of the volatile terpenes biosynthesis pathways. Dihydroxylated sesquiterpenoid synthase that generates dually hydroxylated products directly from (E,E)-farnesyl diphosphate, primarily eudesmane-2,11-diol, along with two closely related structural isomers. The protein is Eudesmanediol synthase of Zea mays (Maize).